Consider the following 441-residue polypeptide: 3-phosphoshikimate 1-carboxyvinyltransferase (441 aa).

3 residues coordinate 3-phosphoshikimate: lysine 22, serine 23, and arginine 27. Residue lysine 22 participates in phosphoenolpyruvate binding. Residues glycine 95 and arginine 123 each coordinate phosphoenolpyruvate. 3-phosphoshikimate is bound by residues serine 168, glutamine 170, aspartate 321, and lysine 348. Glutamine 170 contributes to the phosphoenolpyruvate binding site. Aspartate 321 (proton acceptor) is an active-site residue. Phosphoenolpyruvate-binding residues include arginine 352 and arginine 400.

Belongs to the EPSP synthase family. As to quaternary structure, monomer.

The protein localises to the cytoplasm. The enzyme catalyses 3-phosphoshikimate + phosphoenolpyruvate = 5-O-(1-carboxyvinyl)-3-phosphoshikimate + phosphate. Its pathway is metabolic intermediate biosynthesis; chorismate biosynthesis; chorismate from D-erythrose 4-phosphate and phosphoenolpyruvate: step 6/7. Functionally, catalyzes the transfer of the enolpyruvyl moiety of phosphoenolpyruvate (PEP) to the 5-hydroxyl of shikimate-3-phosphate (S3P) to produce enolpyruvyl shikimate-3-phosphate and inorganic phosphate. The chain is 3-phosphoshikimate 1-carboxyvinyltransferase from Novosphingobium aromaticivorans (strain ATCC 700278 / DSM 12444 / CCUG 56034 / CIP 105152 / NBRC 16084 / F199).